A 110-amino-acid chain; its full sequence is Late cornified envelope protein 2C (110 aa).

Positions 1–10 are enriched in low complexity; the sequence is MSCQQNQQQC. The interval 1-23 is disordered; that stretch reads MSCQQNQQQCQPPPKCPPKCTPK. The segment covering 11–23 has biased composition (pro residues); sequence QPPPKCPPKCTPK.

It belongs to the LCE family. As to quaternary structure, interacts with CYSRT1; the interaction is direct. In terms of tissue distribution, skin-specific. Expression was readily detected in adult trunk skin, adult arm skin, fetal skin, penal skin, vulva, esophagus and tongue. Not expressed in the cervix, rectum, lung, colon, or placenta.

Precursors of the cornified envelope of the stratum. This Homo sapiens (Human) protein is Late cornified envelope protein 2C (LCE2C).